The following is a 501-amino-acid chain: Raftlin-2 (501 aa).

Disordered stretches follow at residues 1-20 (MGCG…GKIF) and 196-238 (SWNE…SRKG). A lipid anchor (N-myristoyl glycine) is attached at Gly2. Residue Cys3 is the site of S-palmitoyl cysteine attachment. A compositionally biased stretch (polar residues) spans 224 to 233 (MEQNGSPSSS). Ser405 is modified (phosphoserine). The disordered stretch occupies residues 407–454 (AQTTDKKASRRIKGEDKNKATSRSIGLDTTTPQPAESRHPPEECRLSP). Thr409 is subject to Phosphothreonine. Positions 410–425 (TDKKASRRIKGEDKNK) are enriched in basic and acidic residues. Polar residues predominate over residues 427 to 440 (TSRSIGLDTTTPQP). Phosphoserine is present on Ser430. A compositionally biased stretch (basic and acidic residues) spans 442–451 (ESRHPPEECR).

This sequence belongs to the raftlin family.

Its subcellular location is the cell membrane. Upon bacterial lipopolysaccharide stimulation, mediates clathrin-dependent internalization of TLR4 in dendritic cells, resulting in activation of TICAM1-mediated signaling and subsequent IFNB1 production. May regulate B-cell antigen receptor mediated-signaling. In Pongo abelii (Sumatran orangutan), this protein is Raftlin-2 (RFTN2).